Here is a 157-residue protein sequence, read N- to C-terminus: Cyclic pyranopterin monophosphate synthase (157 aa).

Residues 74–76 (MCH) and 112–113 (ME) each bind substrate. The active site involves D127.

Belongs to the MoaC family. Homohexamer; trimer of dimers.

The enzyme catalyses (8S)-3',8-cyclo-7,8-dihydroguanosine 5'-triphosphate = cyclic pyranopterin phosphate + diphosphate. Its pathway is cofactor biosynthesis; molybdopterin biosynthesis. Functionally, catalyzes the conversion of (8S)-3',8-cyclo-7,8-dihydroguanosine 5'-triphosphate to cyclic pyranopterin monophosphate (cPMP). This is Cyclic pyranopterin monophosphate synthase from Campylobacter jejuni subsp. doylei (strain ATCC BAA-1458 / RM4099 / 269.97).